The following is a 424-amino-acid chain: Probable methyltransferase EP424R (424 aa).

The Adrift-type SAM-dependent 2'-O-MTase domain maps to 104 to 316 (QIVTNAWLKM…TYIVGKNRLR (213 aa)). S-adenosyl-L-methionine is bound by residues Gly136 and Asp229. Residue Lys269 is the Proton acceptor of the active site.

The protein resides in the virion. The protein is Probable methyltransferase EP424R of African swine fever virus (strain Badajoz 1971 Vero-adapted) (Ba71V).